The primary structure comprises 559 residues: NXPE family member 3 (559 aa).

Positions 1 to 30 are cleaved as a signal peptide; sequence MWTNFFKLRLFCCLLAVLMVVVLVINVTQV. N237, N292, and N346 each carry an N-linked (GlcNAc...) asparagine glycan.

This sequence belongs to the NXPE family.

Its subcellular location is the secreted. The chain is NXPE family member 3 (NXPE3) from Homo sapiens (Human).